Here is a 118-residue protein sequence, read N- to C-terminus: MTHMHITSWVIALILVFVAYGLYSSGNSKGAKITHMILRLFYIIVIITGAQLFLKFTAWNGEYIAKALLGLITIGFMEMLLIRRKNGKAATGIWIGFIVVLLLTVVLGLRLPLGFKVF.

Transmembrane regions (helical) follow at residues 6 to 26, 33 to 53, 62 to 82, and 89 to 109; these read ITSWVIALILVFVAYGLYSSG, ITHMILRLFYIIVIITGAQLF, EYIAKALLGLITIGFMEMLLI, and AATGIWIGFIVVLLLTVVLGL.

It belongs to the UPF0344 family.

It localises to the cell membrane. The sequence is that of UPF0344 protein BLi01172/BL01343 from Bacillus licheniformis (strain ATCC 14580 / DSM 13 / JCM 2505 / CCUG 7422 / NBRC 12200 / NCIMB 9375 / NCTC 10341 / NRRL NRS-1264 / Gibson 46).